The sequence spans 404 residues: Short chain dehydrogenase sirR (404 aa).

Residues 1-28 (MHSKPQRALVIGATGVSGWSLCLQLLQT) form the signal peptide. Positions 56 and 58 each coordinate NADP(+). Residues Asn67 and Asn157 are each glycosylated (N-linked (GlcNAc...) asparagine). Ser237 serves as the catalytic Proton donor. Residue Asn274 is glycosylated (N-linked (GlcNAc...) asparagine). Position 291 (Val291) interacts with NADP(+).

It belongs to the short-chain dehydrogenases/reductases (SDR) family. Highly divergent.

It participates in mycotoxin biosynthesis. Short chain dehydrogenase; part of the gene cluster that mediates the biosynthesis of sirodesmin PL, an epipolythiodioxopiperazine (ETP) characterized by a disulfide bridged cyclic dipeptide and that acts as a phytotoxin which is involved in the blackleg didease of canola. SirD catalyzes the O-prenylation of L-tyrosine (L-Tyr) in the presence of dimethylallyl diphosphate (DMAPP) to yield 4-O-dimethylallyl-L-Tyr, and therefore represents probably the first pathway-specific enzyme in the biosynthesis of sirodesmin PL. 4-O-dimethylallyl-L-Tyr, then undergoes condensation with L-Ser in a reaction catalyzed by the non-ribosomal peptide synthase sirP to form the diketopiperazine (DKP) backbone. Further bishydroxylation of the DKP performed by the cytochrome P450 monooxygenase sirC leads to the production of the intermediate phomamide. This step is essential to form the reactive thiol group required for toxicity of sirodesmin PL. The next steps of sirodesmin biosynthesis are not well understood yet, but some predictions could be made from intermediate compounds identification. Phomamide is converted into phomalizarine via oxidation, probably by sirT. Further oxidation, methylation (by sirM or sirN) and reduction steps convert phomalizarine to deacetyl sirodesmin. Finally, acetyltransferase sirH probably acetylates deacetyl sirodesmin to produce sirodesmin PL. This is Short chain dehydrogenase sirR from Leptosphaeria maculans (Blackleg fungus).